Consider the following 106-residue polypeptide: uncharacterized protein (106 aa).

This is an uncharacterized protein from Thermoproteus tenax virus 1 (strain KRA1) (TTV1).